The primary structure comprises 697 residues: Elongation factor G (697 aa).

The tr-type G domain maps to 10–285; the sequence is EKTRNIGIVA…GVNDYLPSPL (276 aa). Residues 19-26, 83-87, and 137-140 each bind GTP; these read AHIDAGKT, DTPGH, and NKMD.

This sequence belongs to the TRAFAC class translation factor GTPase superfamily. Classic translation factor GTPase family. EF-G/EF-2 subfamily.

The protein localises to the cytoplasm. Functionally, catalyzes the GTP-dependent ribosomal translocation step during translation elongation. During this step, the ribosome changes from the pre-translocational (PRE) to the post-translocational (POST) state as the newly formed A-site-bound peptidyl-tRNA and P-site-bound deacylated tRNA move to the P and E sites, respectively. Catalyzes the coordinated movement of the two tRNA molecules, the mRNA and conformational changes in the ribosome. This is Elongation factor G from Ligilactobacillus salivarius (strain UCC118) (Lactobacillus salivarius).